A 234-amino-acid chain; its full sequence is Cell adhesion molecule CEACAM15 (234 aa).

A signal peptide spans 1-32; the sequence is MGAETMESPSLFLCKGLLLTASLLICWNWSTA. Asparagine 28, asparagine 75, asparagine 151, and asparagine 184 each carry an N-linked (GlcNAc...) asparagine glycan. In terms of domain architecture, Ig-like C2-type spans 146–226; that stretch reads PYLQLNHTRL…NSFSSKKSYP (81 aa). An intrachain disulfide couples cysteine 165 to cysteine 213.

Belongs to the immunoglobulin superfamily. CEA family. As to expression, detected in placenta.

The protein is Cell adhesion molecule CEACAM15 of Mus musculus (Mouse).